Consider the following 309-residue polypeptide: Eugenol synthase 2 (309 aa).

Residues 13–16 (TGYI), 35–45 (VRETTVSDPVK), R36, 86–88 (FMQ), 111–113 (SEF), K134, and 154–156 (NCF) contribute to the NADP(+) site. Residue K134 is the Proton donor/acceptor of the active site.

Belongs to the NmrA-type oxidoreductase family. As to expression, mostly expressed in petals, and, to a lower extent, in sepals, stamens and pistils.

It carries out the reaction eugenol + a carboxylate + NADP(+) = a coniferyl ester + NADPH. It catalyses the reaction eugenol + acetate + NADP(+) = (E)-coniferyl acetate + NADPH. It functions in the pathway aromatic compound metabolism; phenylpropanoid biosynthesis. Its function is as follows. Catalyzes the synthesis of the phenylpropene eugenol from coniferyl acetate. Phenylpropenes are produced by plants as defense compounds with antimicrobial and antianimal properties, or as floral attractants of pollinators. The sequence is that of Eugenol synthase 2 from Clarkia breweri (Fairy fans).